We begin with the raw amino-acid sequence, 519 residues long: NEQANLRLSEANSGTYKTFIGRVREELGSETYRLYGIPVLKHSLSNSNRFYLLTLTSNQDESITLAIDVEDMVAVAYQPAGSHESYFFLNAPQIAFHTLFTDTHQNVLNFDNTFKSLENAAGTTRQTIVLGVDPLDFAISNLFNADPKLLPLSFLVIIQMVLEASKFRFIEQSVAYSFKNEKTFLPDLAIVSLEDNWSEISLQIQASTSLQGLFGSVVELYNSNNELIEVDSIYYPIILANVALQLYHCQVSTGDNECLVETRTTRISGRDALCVDVAGALTSDGSRLILYPCGQQVNQKWTFHSDGTVRSLGKCLATNNSKFGNLVVIYDCSKLAAEDISWDVSVGGTIMNPNYEDLALTSNKATRSTNLTMEVNTYSASQGWRVGNYVQPIIGSIVGLDDMCLEATDGNTNMWLEECVPNQREQSWALYSDGTIRVDDNRELCVTASSSTYDNWKVITILNCDGSNNQRWVFLADGSISTPGNQRLAMDVARSDVDLKKIILHRPHGDLNQQWVLFY.

2 cysteine pairs are disulfide-bonded: C249-C258 and C274-C293. Ricin B-type lectin domains follow at residues 261–387 (ETRT…WRVG) and 390–518 (VQPI…WVLF). A 1-alpha repeat occupies 271 to 311 (DALCVDVAGALTSDGSRLILYPCGQQVNQKWTFHSDGTVRS). A carbohydrate-binding positions include 276 to 279 (DVAG) and 296 to 298 (QVN). The stretch at 312–352 (LGKCLATNNSKFGNLVVIYDCSKLAAEDISWDVSVGGTIMN) is one 1-beta repeat. C315 and C332 are joined by a disulfide. The stretch at 356 to 388 (EDLALTSNKATRSTNLTMEVNTYSASQGWRVGN) is one 1-gamma repeat. N370 is a glycosylation site (N-linked (GlcNAc...) asparagine). A 2-alpha repeat occupies 401–438 (DDMCLEATDGNTNMWLEECVPNQREQSWALYSDGTIRV). Disulfide bonds link C404/C419 and C445/C464. The stretch at 442 to 482 (RELCVTASSSTYDNWKVITILNCDGSNNQRWVFLADGSIST) is one 2-beta repeat. A carbohydrate-binding positions include D454, 491–494 (DVAR), 505–508 (HRPH), and N512. The 2-gamma repeat unit spans residues 486-513 (QRLAMDVARSDVDLKKIILHRPHGDLNQ).

This sequence in the N-terminal section; belongs to the ribosome-inactivating protein family. Type 2 RIP subfamily. In terms of assembly, heterotrimer consisting of Aalpha, Abeta and B chains with Abeta and B being disulfide-linked.

Seed lectin similar to type 2 ribosome-inactivating proteins. The Aalpha and Abeta chains constitute the rRNA glycosidase domain and the B chain the carbohydrate-binding lectin domain. Is predicted to have no glycosidase activity and, hence, to be non-toxic, due to small changes in both the nucleotide binding and carbohydrate binding capabilities. Binds galactose and derivatives with a preference for the beta-anomeric forms. Binds prophyrins. Has hemagglutinating activity towards rabbit and human erythrocytes. This Trichosanthes anguina (Snake gourd) protein is Seed lectin.